The sequence spans 256 residues: V-type proton ATPase subunit D (256 aa).

Residues 211 to 230 (QNETAKLDAEMKLKRDRAEQ) are compositionally biased toward basic and acidic residues. The disordered stretch occupies residues 211-256 (QNETAKLDAEMKLKRDRAEQDASEVAADEEPQGETLVADQEDDVIF).

The protein belongs to the V-ATPase D subunit family. In terms of assembly, V-ATPase is a heteromultimeric enzyme composed of a peripheral catalytic V1 complex (components A to H) attached to an integral membrane V0 proton pore complex (components: a, c, c', c'', d, e, f and VOA1). Interacts with RAV1 and RAV2 components of the RAVE complex, which are essential for the stability and assembly of V-ATPase.

The protein localises to the vacuole membrane. Functionally, subunit of the V1 complex of vacuolar(H+)-ATPase (V-ATPase), a multisubunit enzyme composed of a peripheral complex (V1) that hydrolyzes ATP and a membrane integral complex (V0) that translocates protons. V-ATPase is responsible for acidifying and maintaining the pH of intracellular compartments. In Saccharomyces cerevisiae (strain ATCC 204508 / S288c) (Baker's yeast), this protein is V-type proton ATPase subunit D.